A 177-amino-acid chain; its full sequence is MSRVAKAPVNIPAGVEVKLDGQLLTVKGKNGELSRKIHESVEVKQDNGQFTFTPREGFVEANAQSGTARALVNAMVIGVTEGFTKKLVLVGVGYRAQLKGNAIALSLGYSHPVEHTLPVGITAECPSQTEIVLKGADKQLIGQVAADIRAYRRPEPYKGKGVRYADEVVRIKEAKKK.

The protein belongs to the universal ribosomal protein uL6 family. In terms of assembly, part of the 50S ribosomal subunit.

Its function is as follows. This protein binds to the 23S rRNA, and is important in its secondary structure. It is located near the subunit interface in the base of the L7/L12 stalk, and near the tRNA binding site of the peptidyltransferase center. The protein is Large ribosomal subunit protein uL6 of Haemophilus influenzae (strain 86-028NP).